Reading from the N-terminus, the 616-residue chain is Dihydroxy-acid dehydratase (616 aa).

Asp-81 contributes to the Mg(2+) binding site. Cys-122 contacts [2Fe-2S] cluster. Positions 123 and 124 each coordinate Mg(2+). At Lys-124 the chain carries N6-carboxylysine. Cys-195 is a [2Fe-2S] cluster binding site. Glu-491 is a binding site for Mg(2+). Residue Ser-517 is the Proton acceptor of the active site.

It belongs to the IlvD/Edd family. Homodimer. [2Fe-2S] cluster is required as a cofactor. Requires Mg(2+) as cofactor.

The catalysed reaction is (2R)-2,3-dihydroxy-3-methylbutanoate = 3-methyl-2-oxobutanoate + H2O. The enzyme catalyses (2R,3R)-2,3-dihydroxy-3-methylpentanoate = (S)-3-methyl-2-oxopentanoate + H2O. The protein operates within amino-acid biosynthesis; L-isoleucine biosynthesis; L-isoleucine from 2-oxobutanoate: step 3/4. It functions in the pathway amino-acid biosynthesis; L-valine biosynthesis; L-valine from pyruvate: step 3/4. Its function is as follows. Functions in the biosynthesis of branched-chain amino acids. Catalyzes the dehydration of (2R,3R)-2,3-dihydroxy-3-methylpentanoate (2,3-dihydroxy-3-methylvalerate) into 2-oxo-3-methylpentanoate (2-oxo-3-methylvalerate) and of (2R)-2,3-dihydroxy-3-methylbutanoate (2,3-dihydroxyisovalerate) into 2-oxo-3-methylbutanoate (2-oxoisovalerate), the penultimate precursor to L-isoleucine and L-valine, respectively. This chain is Dihydroxy-acid dehydratase, found in Salmonella schwarzengrund (strain CVM19633).